The primary structure comprises 88 residues: Small ribosomal subunit protein uS15 (88 aa).

Belongs to the universal ribosomal protein uS15 family. Part of the 30S ribosomal subunit. Forms a bridge to the 50S subunit in the 70S ribosome, contacting the 23S rRNA.

In terms of biological role, one of the primary rRNA binding proteins, it binds directly to 16S rRNA where it helps nucleate assembly of the platform of the 30S subunit by binding and bridging several RNA helices of the 16S rRNA. Its function is as follows. Forms an intersubunit bridge (bridge B4) with the 23S rRNA of the 50S subunit in the ribosome. The polypeptide is Small ribosomal subunit protein uS15 (Geobacter sp. (strain M21)).